The sequence spans 232 residues: Ubiquinone biosynthesis O-methyltransferase (232 aa).

4 residues coordinate S-adenosyl-L-methionine: Arg36, Gly55, Asp76, and Leu120.

The protein belongs to the methyltransferase superfamily. UbiG/COQ3 family.

It carries out the reaction a 3-demethylubiquinol + S-adenosyl-L-methionine = a ubiquinol + S-adenosyl-L-homocysteine + H(+). It catalyses the reaction a 3-(all-trans-polyprenyl)benzene-1,2-diol + S-adenosyl-L-methionine = a 2-methoxy-6-(all-trans-polyprenyl)phenol + S-adenosyl-L-homocysteine + H(+). Its pathway is cofactor biosynthesis; ubiquinone biosynthesis. Functionally, O-methyltransferase that catalyzes the 2 O-methylation steps in the ubiquinone biosynthetic pathway. This chain is Ubiquinone biosynthesis O-methyltransferase, found in Pseudomonas entomophila (strain L48).